The primary structure comprises 1074 residues: Probable arabinosyltransferase C (1074 aa).

Transmembrane regions (helical) follow at residues 15 to 37 (ARLV…PLLP), 214 to 236 (LLKL…ALHV), 251 to 273 (SRWW…WHFV), 415 to 437 (IIIG…ALLV), 452 to 474 (RFGY…FLIF), 516 to 538 (SVAR…AMTL), 573 to 595 (THQF…VAVT), 608 to 630 (FGAA…WYVS), 645 to 667 (FGFT…WFHF), and 684 to 706 (LLVA…SLTL).

Belongs to the emb family.

The protein localises to the cell membrane. Arabinosyl transferase responsible for the polymerization of arabinose into the arabinan of arabinogalactan. In Mycolicibacterium smegmatis (Mycobacterium smegmatis), this protein is Probable arabinosyltransferase C (embC).